A 329-amino-acid chain; its full sequence is Isopenicillin N synthase (329 aa).

Residues Arg87, Tyr91, Ser183, and Tyr189 each coordinate isopenicillin N. Positions 87, 91, 183, 189, 212, and 214 each coordinate N-[(5S)-5-amino-5-carboxypentanoyl]-L-cysteinyl-D-valine. A Fe2OG dioxygenase domain is found at 180–286 (SLSSVSLIRY…RLSLPFFLNG (107 aa)). The Fe(2+) site is built by His212, Asp214, and His268. Arg277 provides a ligand contact to 2-oxoglutarate. Ser279 serves as a coordination point for isopenicillin N. Position 279 (Ser279) interacts with N-[(5S)-5-amino-5-carboxypentanoyl]-L-cysteinyl-D-valine.

The protein belongs to the iron/ascorbate-dependent oxidoreductase family. Fe cation serves as cofactor. Requires L-ascorbate as cofactor.

The catalysed reaction is N-[(5S)-5-amino-5-carboxypentanoyl]-L-cysteinyl-D-valine + O2 = isopenicillin N + 2 H2O. Its pathway is antibiotic biosynthesis; penicillin G biosynthesis; penicillin G from L-alpha-aminoadipate and L-cysteine and L-valine: step 2/3. Functionally, removes, in the presence of oxygen, 4 hydrogen atoms from delta-L-(alpha-aminoadipyl)-L-cysteinyl-D-valine (ACV) to form the azetidinone and thiazolidine rings of isopenicillin. The sequence is that of Isopenicillin N synthase (pcbC) from Streptomyces clavuligerus.